The chain runs to 1467 residues: Helicase ARIP4 (1467 aa).

Disordered regions lie at residues 1–150 and 186–234; these read MSDE…YAAP and DSSS…GGTH. A compositionally biased stretch (acidic residues) spans 11 to 49; it reads PDLDPDVELEDAEEEEEEEEVAVEECDRDDEEDLLDDPS. Positions 72–82 are enriched in low complexity; it reads TSTTSSQSEPS. The span at 100–115 shows a compositional bias: basic residues; the sequence is KKRAQKPSHMRRNIRK. Residues Lys-115 and Lys-127 each participate in a glycyl lysine isopeptide (Lys-Gly) (interchain with G-Cter in SUMO2) cross-link. Basic and acidic residues-rich tracts occupy residues 133–147 and 192–201; these read ELER…RKDY and EDEKSSRDEV. A Glycyl lysine isopeptide (Lys-Gly) (interchain with G-Cter in SUMO2) cross-link involves residue Lys-272. Positions 292-512 constitute a Helicase ATP-binding domain; the sequence is RFKTSSGFGC…WCMVDFVRPD (221 aa). 305–312 contributes to the ATP binding site; that stretch reads HSMGLGKT. The DEAH box motif lies at 463–466; that stretch reads DEGH. The LXXLL motif 1 motif lies at 551 to 555; it reads LHSLL. The disordered stretch occupies residues 649 to 673; the sequence is GSAGTSARCPPQGTKGKGEDSTLAS. Glycyl lysine isopeptide (Lys-Gly) (interchain with G-Cter in SUMO2) cross-links involve residues Lys-665, Lys-682, Lys-759, Lys-901, Lys-1014, and Lys-1018. Residues 728 to 896 enclose the Helicase C-terminal domain; it reads HLIEESVKLG…RVVDDLNPML (169 aa). A disordered region spans residues 1120–1171; the sequence is RATGKPKVPEDGRMAASGSQGPSCESTSNGRHSASSPKAPDPEGLARPVSPD. Positions 1136 to 1155 are enriched in polar residues; it reads SGSQGPSCESTSNGRHSASS. Phosphoserine occurs at positions 1169 and 1172. Disordered stretches follow at residues 1184–1221 and 1247–1284; these read DVAA…TALG and PVLD…VQPY. The residue at position 1260 (Thr-1260) is a Phosphothreonine. An LXXLL motif 2 motif is present at residues 1329 to 1333; the sequence is LSNLL. Residues 1445 to 1467 are disordered; it reads AEVGFSSNDDEDKDDDVIEVTGK. Over residues 1452–1467 the composition is skewed to acidic residues; sequence NDDEDKDDDVIEVTGK.

Belongs to the SNF2/RAD54 helicase family. In terms of assembly, interacts with AR via its N-terminus. Interacts with DYRK1A. Binds DNA and mononucleosomes, but does not seem to form large multiprotein complexes. In terms of processing, sumoylated.

It localises to the nucleus. It catalyses the reaction ATP + H2O = ADP + phosphate + H(+). With respect to regulation, enzyme activity is enhanced by dsDNA (double-stranded DNA) and ssDNA (single-stranded DNA). In terms of biological role, DNA helicase that modulates androgen receptor (AR)-dependent transactivation in a promoter-dependent manner. Not able to remodel mononucleosomes in vitro. The polypeptide is Helicase ARIP4 (RAD54L2) (Homo sapiens (Human)).